A 253-amino-acid polypeptide reads, in one-letter code: uncharacterized protein (253 aa).

One can recognise a BPL/LPL catalytic domain in the interval Ala-30–Ala-236.

This is an uncharacterized protein from Cupriavidus necator (strain ATCC 17699 / DSM 428 / KCTC 22496 / NCIMB 10442 / H16 / Stanier 337) (Ralstonia eutropha).